The primary structure comprises 254 residues: H-2 class II histocompatibility antigen, I-E alpha chain (254 aa).

The signal sequence occupies residues 1–24 (RSRALILGVLALTTMLSLCGGEDD). Residues 25-109 (IEADHVAFYG…KDSNFTPAAN (85 aa)) form an alpha-1 region. The Extracellular segment spans residues 25–216 (IEADHVAFYG…IPAPMSELTE (192 aa)). 2 N-linked (GlcNAc...) asparagine glycosylation sites follow: N103 and N143. The segment at 110-203 (EAPQATVFPK…GLEEPVLKHW (94 aa)) is alpha-2. The Ig-like C1-type domain occupies 112–204 (PQATVFPKSP…LEEPVLKHWE (93 aa)). C132 and C188 are joined by a disulfide. The segment at 204-216 (EPEIPAPMSELTE) is connecting peptide. Residues 217–242 (TVVCALGLSVGLVGIVVGTIFIIQGL) traverse the membrane as a helical segment. Residues 243 to 254 (RSGGTSRHPGPL) are Cytoplasmic-facing.

This sequence belongs to the MHC class II family.

It localises to the membrane. This Mus musculus (Mouse) protein is H-2 class II histocompatibility antigen, I-E alpha chain.